Reading from the N-terminus, the 379-residue chain is Nucleosome assembly protein 1;2 (379 aa).

The stretch at 26–80 (VNALKNKLQNLAGQHSDVLENLTPPVRKRVEFLREIQNQYDEMEAKFFEERAALE) forms a coiled coil. Serine 41 is subject to Phosphoserine. Residues 47-62 (LTPPVRKRVEFLREIQ) carry the Nuclear export signal motif. A Nuclear localization signal motif is present at residues 222 to 227 (KKKPKK). Positions 298–379 (AVEADDLDIE…GERPPECKQQ (82 aa)) are disordered. The span at 299-342 (VEADDLDIEDDDDEIDEDDDEEDEEDDEDDEEEDDEDDDEEEEA) shows a compositional bias: acidic residues. Over residues 347–360 (KSKKKSSAGHKKAG) the composition is skewed to basic residues. Cysteine methyl ester is present on cysteine 376. Cysteine 376 carries the S-farnesyl cysteine lipid modification. A propeptide spans 377-379 (KQQ) (removed in mature form).

This sequence belongs to the nucleosome assembly protein (NAP) family. As to quaternary structure, can form homomeric and heteromeric protein complexes with NAP1;1, NAP1;3 and NAP1;4. Binds histone H2A. As to expression, ubiquitous.

It localises to the nucleus. It is found in the cytoplasm. In terms of biological role, may modulate chromatin structure by regulation of nucleosome assembly/disassembly. May function in nucleotide excision repair (NER). Involved in somatic homologous recombination. The chain is Nucleosome assembly protein 1;2 (NAP1;2) from Arabidopsis thaliana (Mouse-ear cress).